A 383-amino-acid polypeptide reads, in one-letter code: Gap junction alpha-1 protein (383 aa).

The Cytoplasmic segment spans residues 2–23 (GDWSALGKLLDKVQAYSTAGGK). A Phosphoserine modification is found at Ser5. The helical transmembrane segment at 24–44 (VWLSVLFIFRILLLGTAVESA) threads the bilayer. Topologically, residues 45-76 (WGDEQSAFRCNTQQPGCENVCYDKSFPISHVR) are extracellular. 2 cysteine pairs are disulfide-bonded: Cys54–Cys193 and Cys188–Cys199. A helical membrane pass occupies residues 77-97 (FWVLQIIFVSVPTLLYLAHVF). Residues 98 to 156 (YVMRKEEKLNKKEEELKVVAQTDGANVDMHLKQIEIKKFKYGIEEHGKVKMRGGLLRTY) are Cytoplasmic-facing. Residue Lys145 forms a Glycyl lysine isopeptide (Lys-Gly) (interchain with G-Cter in SUMO) linkage. A helical transmembrane segment spans residues 157-177 (IISILFKSVFEVAFLLIQWYI). At 178–208 (YGFSLSAVYTCKRDPCPHQVDCFLSRPTEKT) the chain is on the extracellular side. A helical transmembrane segment spans residues 209-229 (IFIIFMLVVSLVSLALNIIEL). Over 230–383 (FYVFFKGVKD…SRPRPDDLEI (154 aa)) the chain is Cytoplasmic. Lys238 is covalently cross-linked (Glycyl lysine isopeptide (Lys-Gly) (interchain with G-Cter in SUMO)). Residues 245 to 383 (SDPYHTTTGP…SRPRPDDLEI (139 aa)) are interaction with NOV. Position 248 is a phosphotyrosine (Tyr248). Ser256, Ser258, and Ser263 each carry phosphoserine. An interaction with UBQLN4 region spans residues 265–383 (KYAYFNGCSS…SRPRPDDLEI (119 aa)). Cys272 carries the S-nitrosocysteine modification. Thr276 is subject to Phosphothreonine. Ser307 and Ser315 each carry phosphoserine. The segment covering 318 to 333 (QNRMGQAGSTISNSHA) has biased composition (polar residues). Residues 318-383 (QNRMGQAGST…SRPRPDDLEI (66 aa)) form a disordered region. Ser326 carries the post-translational modification Phosphoserine; by CK1. Thr327 carries the post-translational modification Phosphothreonine. Residues Ser329 and Ser331 each carry the phosphoserine; by CK1 modification. Residues 339–352 (PDDHQNSKKLDAGH) are compositionally biased toward basic and acidic residues. Phosphoserine is present on residues Ser345 and Ser366. Positions 363-375 (RPSSRASSRASSR) are enriched in low complexity. Ser369 bears the Phosphoserine; by PKC/PRKCG and PKC/PRKCD mark. A phosphoserine mark is found at Ser370 and Ser374.

Belongs to the connexin family. Alpha-type (group II) subfamily. As to quaternary structure, a connexon is composed of a hexamer of connexins. Interacts with SGSM3. Interacts with RIC1/CIP150. Interacts with CNST and CSNK1D. Interacts (via C-terminus) with TJP1. Interacts (via C-terminus) with SRC (via SH3 domain). Interacts (not ubiquitinated) with UBQLN4 (via UBA domain). Interacts with NOV. Interacts with TMEM65. Interacts with ANK3/ANKG and PKP2. Phosphorylation at Ser-326, Ser-329 and Ser-331 by CK1 modulates gap junction assembly. Phosphorylated at Ser-369 by PRKCG; phosphorylation induces disassembly of gap junction plaques and inhibition of gap junction activity. Phosphorylation at Ser-369 by PRKCD triggers its internalization into small vesicles leading to proteasome-mediated degradation. In terms of processing, sumoylated with SUMO1, SUMO2 and SUMO3, which may regulate the level of functional Cx43 gap junctions at the plasma membrane. May be desumoylated by SENP1 or SENP2. Post-translationally, acetylated in the developing cortex; leading to delocalization from the cell membrane.

The protein resides in the cell membrane. The protein localises to the cell junction. It is found in the gap junction. It localises to the endoplasmic reticulum. In terms of biological role, gap junction protein that acts as a regulator of bladder capacity. A gap junction consists of a cluster of closely packed pairs of transmembrane channels, the connexons, through which materials of low MW diffuse from one cell to a neighboring cell. May play a critical role in the physiology of hearing by participating in the recycling of potassium to the cochlear endolymph. Negative regulator of bladder functional capacity: acts by enhancing intercellular electrical and chemical transmission, thus sensitizing bladder muscles to cholinergic neural stimuli and causing them to contract. May play a role in cell growth inhibition through the regulation of NOV expression and localization. Plays an essential role in gap junction communication in the ventricles. The protein is Gap junction alpha-1 protein (GJA1) of Bos taurus (Bovine).